The sequence spans 120 residues: Large ribosomal subunit protein bL20 (120 aa).

It belongs to the bacterial ribosomal protein bL20 family.

In terms of biological role, binds directly to 23S ribosomal RNA and is necessary for the in vitro assembly process of the 50S ribosomal subunit. It is not involved in the protein synthesizing functions of that subunit. This Methylacidiphilum infernorum (isolate V4) (Methylokorus infernorum (strain V4)) protein is Large ribosomal subunit protein bL20.